We begin with the raw amino-acid sequence, 1182 residues long: DNA-directed RNA polymerase subunit beta' (1182 aa).

Positions 59, 61, 74, and 77 each coordinate Zn(2+). Asp449, Asp451, and Asp453 together coordinate Mg(2+). 4 residues coordinate Zn(2+): Cys794, Cys868, Cys875, and Cys878.

This sequence belongs to the RNA polymerase beta' chain family. In terms of assembly, the RNAP catalytic core consists of 2 alpha, 1 beta, 1 beta' and 1 omega subunit. When a sigma factor is associated with the core the holoenzyme is formed, which can initiate transcription. Mg(2+) serves as cofactor. Zn(2+) is required as a cofactor.

The enzyme catalyses RNA(n) + a ribonucleoside 5'-triphosphate = RNA(n+1) + diphosphate. Its function is as follows. DNA-dependent RNA polymerase catalyzes the transcription of DNA into RNA using the four ribonucleoside triphosphates as substrates. The protein is DNA-directed RNA polymerase subunit beta' of Clostridium acetobutylicum (strain ATCC 824 / DSM 792 / JCM 1419 / IAM 19013 / LMG 5710 / NBRC 13948 / NRRL B-527 / VKM B-1787 / 2291 / W).